The sequence spans 548 residues: Solute carrier family 22 member 7 (548 aa).

12 helical membrane-spanning segments follow: residues 21–41, 146–166, 180–200, 204–224, 234–254, 259–279, 346–366, 376–397, 404–423, 432–452, 466–486, and 493–513; these read VALLALPRVLLPLHFLLPIFL, AASTFFFAGVLVGAVAFGYLS, VSTLVLGLASAASVSYVMFAI, LTGSALAGFTIIVMPLELEWL, VLSSTFWTGGMMLLALVGYLI, WLLLAVTLPCAPGILSLWWVP, ISLCCVVVWFGVNFSYYGLSL, YQTQLLFGAVELPSKLLVYLSV, LTQAGTLLGTALAFGTRLLV, TVLAVMGKAFSEAAFTTAYLF, MGLTALVGRLGGSLAPLAALL, and LPKLTYGGIALLAAGTALLLP. The interval 522–548 is disordered; it reads ETIQDVERKSAPTSLQEEEMPMKQVQN.

This sequence belongs to the major facilitator (TC 2.A.1) superfamily. Organic cation transporter (TC 2.A.1.19) family.

The protein resides in the basolateral cell membrane. It localises to the apical cell membrane. Its subcellular location is the cell membrane. The enzyme catalyses orotate(out) + L-glutamate(in) = orotate(in) + L-glutamate(out). The catalysed reaction is 3',5'-cyclic GMP(in) = 3',5'-cyclic GMP(out). It catalyses the reaction GMP(in) = GMP(out). It carries out the reaction 2'-deoxyguanosine(in) = 2'-deoxyguanosine(out). The enzyme catalyses GDP(in) = GDP(out). The catalysed reaction is guanosine(in) = guanosine(out). It catalyses the reaction GTP(in) = GTP(out). It carries out the reaction 3',5'-cyclic AMP(in) = 3',5'-cyclic AMP(out). The enzyme catalyses creatinine(in) = creatinine(out). The catalysed reaction is prostaglandin E2(out) = prostaglandin E2(in). It catalyses the reaction 2-oxoglutarate(in) = 2-oxoglutarate(out). It carries out the reaction glutarate(in) = glutarate(out). The enzyme catalyses urate(out) = urate(in). The catalysed reaction is estrone 3-sulfate(out) = estrone 3-sulfate(in). In terms of biological role, functions as a Na(+)-independent bidirectional multispecific transporter. Contributes to the renal and hepatic elimination of endogenous organic compounds from the systemic circulation into the urine and bile, respectively. Capable of transporting a wide range of purine and pyrimidine nucleobases, nucleosides and nucleotides, with cGMP, 2'deoxyguanosine and GMP being the preferred substrates. Functions as a pH- and chloride-independent cGMP bidirectional facilitative transporter that can regulate both intracellular and extracellular levels of cGMP and may be involved in cGMP signaling pathways. Mediates orotate/glutamate bidirectional exchange and most likely display a physiological role in hepatic release of glutamate into the blood. Involved in renal secretion and possible reabsorption of creatinine. Able to uptake prostaglandin E2 (PGE2) and may contribute to PGE2 renal excretion. Also transports alpha-ketoglutarate and urate. Apart from the orotate/glutamate exchange, the counterions for the uptake of other SLC22A7/OAT2 substrates remain to be identified. The sequence is that of Solute carrier family 22 member 7 (SLC22A7) from Pongo abelii (Sumatran orangutan).